A 364-amino-acid chain; its full sequence is DNA replication and repair protein RecF (364 aa).

An ATP-binding site is contributed by 23 to 30 (GPNGIGKS).

It belongs to the RecF family.

Its subcellular location is the cytoplasm. Its function is as follows. The RecF protein is involved in DNA metabolism; it is required for DNA replication and normal SOS inducibility. RecF binds preferentially to single-stranded, linear DNA. It also seems to bind ATP. This chain is DNA replication and repair protein RecF, found in Synechococcus sp. (strain CC9605).